Here is a 389-residue protein sequence, read N- to C-terminus: Chalcone synthase 1A (389 aa).

The active site involves C164.

It belongs to the thiolase-like superfamily. Chalcone/stilbene synthases family.

It carries out the reaction (E)-4-coumaroyl-CoA + 3 malonyl-CoA + 3 H(+) = 2',4,4',6'-tetrahydroxychalcone + 3 CO2 + 4 CoA. It participates in secondary metabolite biosynthesis; flavonoid biosynthesis. Functionally, the primary product of this enzyme is 4,2',4',6'-tetrahydroxychalcone (also termed naringenin-chalcone or chalcone) which can under specific conditions spontaneously isomerize into naringenin. The protein is Chalcone synthase 1A (CHS-1A) of Pisum sativum (Garden pea).